We begin with the raw amino-acid sequence, 622 residues long: uncharacterized protein (622 aa).

[4Fe-4S] cluster-binding residues include Cys302, Cys306, Cys310, and Cys521.

Belongs to the AOR/FOR family. [4Fe-4S] cluster serves as cofactor.

This is an uncharacterized protein from Methanocaldococcus jannaschii (strain ATCC 43067 / DSM 2661 / JAL-1 / JCM 10045 / NBRC 100440) (Methanococcus jannaschii).